Here is a 105-residue protein sequence, read N- to C-terminus: MIYSTTESIPGKEIEEIVGVVTGNVVQAKHIGRDIMAGLKSIVGGEIRGYTEMLTDARDIAIQRLVANAEEKGADAVVGIRFTTSAIMDGSSEIMVFGTAVKLKK.

Belongs to the UPF0145 family.

The sequence is that of UPF0145 protein CPS_2458 from Colwellia psychrerythraea (strain 34H / ATCC BAA-681) (Vibrio psychroerythus).